Reading from the N-terminus, the 496-residue chain is Mothers against decapentaplegic homolog 6 (496 aa).

The span at 1–15 (MFRSKRSGLVRRLWR) shows a compositional bias: basic residues. 2 disordered regions span residues 1-116 (MFRS…PGWL) and 136-156 (GAPR…AGGG). R75 and R82 each carry dimethylated arginine; alternate. Omega-N-methylarginine; alternate is present on residues R75 and R82. An MH1 domain is found at 148-275 (AALEPAGGGR…FSRLCGPESP (128 aa)). K173 participates in a covalent cross-link: Glycyl lysine isopeptide (Lys-Gly) (interchain with G-Cter in ubiquitin). Residues C205, C247, C260, and H265 each coordinate Zn(2+). Residues 331-496 (WCSVAYWEHR…WLEILLNNPR (166 aa)) enclose the MH2 domain. S435 is subject to Phosphoserine; by PRKX; in vitro.

The protein belongs to the dwarfin/SMAD family. As to quaternary structure, interacts with NEDD4L. Interacts with WWP1. Interacts with STAMBP and PRKX. Interacts with RNF111 and AXIN1. Interacts with TGF-beta type I receptor superfamily members, including ACVR1B, BMPR1B and TGFBR1. In response to BMP2, but not to TGFB treatment, interacts with SMAD1, but not with SMAD2, nor with SMAD4; this interaction may inhibit SMAD1 binding to SMAD4. Interacts with HOXC8 and HOXC9. Interacts with PELI1; this interaction interferes with PELI1 complex formation with TRAF6, IRAK1, IRAK4 and MYD88 in response to IL1B and hence negatively regulates IL1R-TLR signaling. Interacts with TSC22D1/TSC-22. In terms of processing, phosphorylated by BMP type 1 receptor kinase and by PRKX. Monoubiquitinated at Lys-173 by the E2/E3 hybrid ubiquitin-protein ligase UBE2O, leading to reduced binding affinity for the activated BMP type I receptor ACVR1/ALK2, thereby enhancing BMP7 and regulating adipocyte differentiation. Ubiquitinated by WWP1. Ubiquitinated by ARK2C, promoting proteasomal degradation, leading to enhance the BMP-Smad signaling. Post-translationally, arginine methylation by PRMT1, which is recruited by BMPR2, initiates BMP-Induced signaling and induces dissociation from the BMPR1B receptor at the cell surface leading to derepress downstream Smad1/Smad5 signaling. As to expression, expressed in the brain, heart, ovary, peripheral blood leukocytes, small intestine, spleen, thymus, bone marrow, fetal liver and lymph nodes.

Its subcellular location is the nucleus. In terms of biological role, transforming growth factor-beta superfamily receptors signaling occurs through the Smad family of intracellular mediators. SMAD6 is an inhibitory Smad (i-Smad) that negatively regulates signaling downstream of type I transforming growth factor-beta. Acts as a mediator of TGF-beta and BMP anti-inflammatory activities. Suppresses IL1R-TLR signaling through its direct interaction with PEL1, preventing NF-kappa-B activation, nuclear transport and NF-kappa-B-mediated expression of pro-inflammatory genes. Blocks the BMP-SMAD1 signaling pathway by competing with SMAD4 for receptor-activated SMAD1-binding. Binds to regulatory elements in target promoter regions. In Homo sapiens (Human), this protein is Mothers against decapentaplegic homolog 6 (SMAD6).